Here is a 743-residue protein sequence, read N- to C-terminus: Apo-petrobactin exporter (743 aa).

Transmembrane regions (helical) follow at residues 20–40 (WITL…LPQV), 199–219 (ADVK…ILLY), 223–243 (ILAI…SPTL), 258–278 (AISI…LFLI), 303–323 (GGAI…LLLA), 337–357 (VAVF…LLIF), 406–426 (WTII…VPRI), 561–581 (DEAV…LVYL), 584–604 (IVAM…ALGA), 613–633 (MGAP…LVAL), 672–692 (AGLI…QVLV), and 694–714 (FGIV…PLLV).

This sequence belongs to the resistance-nodulation-cell division (RND) (TC 2.A.6) family. MmpL subfamily.

The protein resides in the cell membrane. In terms of biological role, exports the siderophore petrobactin. In Bacillus anthracis, this protein is Apo-petrobactin exporter.